A 305-amino-acid polypeptide reads, in one-letter code: Ornithine carbamoyltransferase (305 aa).

Carbamoyl phosphate contacts are provided by residues 52 to 55 (STRT), Gln79, Arg103, and 130 to 133 (HPLQ). L-ornithine is bound by residues Asn162, Asp224, and 228-229 (SM). Residues 264 to 265 (CL) and Arg292 each bind carbamoyl phosphate.

Belongs to the aspartate/ornithine carbamoyltransferase superfamily. OTCase family.

Its subcellular location is the cytoplasm. The catalysed reaction is carbamoyl phosphate + L-ornithine = L-citrulline + phosphate + H(+). It functions in the pathway amino-acid biosynthesis; L-arginine biosynthesis; L-arginine from L-ornithine and carbamoyl phosphate: step 1/3. Its function is as follows. Reversibly catalyzes the transfer of the carbamoyl group from carbamoyl phosphate (CP) to the N(epsilon) atom of ornithine (ORN) to produce L-citrulline. The chain is Ornithine carbamoyltransferase from Pyrobaculum islandicum (strain DSM 4184 / JCM 9189 / GEO3).